Consider the following 941-residue polypeptide: ATP-dependent 6-phosphofructokinase subunit beta (941 aa).

An N-terminal catalytic PFK domain 1 region spans residues 2 to 558 (PDASLFNGTS…HMKNFISTNS (557 aa)). ATP contacts are provided by residues glycine 191, 255 to 256 (RC), and 285 to 288 (GDGS). Residue aspartate 286 coordinates Mg(2+). Beta-D-fructose 6-phosphate is bound by residues 331-333 (SID), arginine 368, and 375-377 (MGR). Catalysis depends on aspartate 333, which acts as the Proton acceptor. Residues isoleucine 395, 400-405 (KPASSR), and glutamine 410 contribute to the ATP site. Residues glutamate 432, arginine 460, and 466 to 469 (HVQR) contribute to the beta-D-fructose 6-phosphate site. 557-558 (NS) is a binding site for ATP. Residues 559-572 (ADHVPPSLPLEKRK) are interdomain linker. Positions 573-941 (KIAIINVGAP…SDMLSGRTSL (369 aa)) are C-terminal regulatory PFK domain 2. Residues arginine 643, 701 to 705 (TISNN), arginine 739, 746 to 748 (QGG), glutamate 806, lysine 832, 838 to 841 (HVQQ), and arginine 918 contribute to the beta-D-fructose 2,6-bisphosphate site.

The protein belongs to the phosphofructokinase type A (PFKA) family. ATP-dependent PFK group I subfamily. Eukaryotic two domain clade 'E' sub-subfamily. As to quaternary structure, heterododecamer of 4 alpha, 4 beta and 4 gamma chains. Mg(2+) serves as cofactor.

The protein resides in the cytoplasm. The catalysed reaction is beta-D-fructose 6-phosphate + ATP = beta-D-fructose 1,6-bisphosphate + ADP + H(+). The protein operates within carbohydrate degradation; glycolysis; D-glyceraldehyde 3-phosphate and glycerone phosphate from D-glucose: step 3/4. Allosterically activated by ADP, AMP, or fructose 2,6-bisphosphate, and allosterically inhibited by ATP or citrate. Functionally, catalyzes the phosphorylation of D-fructose 6-phosphate to fructose 1,6-bisphosphate by ATP, the first committing step of glycolysis. This Komagataella pastoris (Yeast) protein is ATP-dependent 6-phosphofructokinase subunit beta (PFK2).